The following is a 255-amino-acid chain: Cytochrome c oxidase subunit 3 (255 aa).

Helical transmembrane passes span 12 to 29, 57 to 77, 91 to 111, 126 to 146, 155 to 175, 196 to 216, and 235 to 255; these read INIINISETLYLFYSTGL, LKYLSVGEFFINSLTIFINGI, IFGMFIFSEIMVFSTFIWGFF, LEAFLQISDVLNAGSILISLI, YFEVDYMLERLILIGFIFLSF, FNVLTGLHSLHVYVGGIFALM, and GMYWHFVEIIWIALTMLLFLL.

It belongs to the cytochrome c oxidase subunit 3 family. Component of the cytochrome c oxidase (complex IV, CIV), a multisubunit enzyme composed of a catalytic core of 3 subunits and several supernumerary subunits. The complex exists as a monomer or a dimer and forms supercomplexes (SCs) in the inner mitochondrial membrane with ubiquinol-cytochrome c oxidoreductase (cytochrome b-c1 complex, complex III, CIII).

Its subcellular location is the mitochondrion inner membrane. The enzyme catalyses 4 Fe(II)-[cytochrome c] + O2 + 8 H(+)(in) = 4 Fe(III)-[cytochrome c] + 2 H2O + 4 H(+)(out). Component of the cytochrome c oxidase, the last enzyme in the mitochondrial electron transport chain which drives oxidative phosphorylation. The respiratory chain contains 3 multisubunit complexes succinate dehydrogenase (complex II, CII), ubiquinol-cytochrome c oxidoreductase (cytochrome b-c1 complex, complex III, CIII) and cytochrome c oxidase (complex IV, CIV), that cooperate to transfer electrons derived from NADH and succinate to molecular oxygen, creating an electrochemical gradient over the inner membrane that drives transmembrane transport and the ATP synthase. Cytochrome c oxidase is the component of the respiratory chain that catalyzes the reduction of oxygen to water. Electrons originating from reduced cytochrome c in the intermembrane space (IMS) are transferred via the dinuclear copper A center (CU(A)) of subunit 2 and heme A of subunit 1 to the active site in subunit 1, a binuclear center (BNC) formed by heme A3 and copper B (CU(B)). The BNC reduces molecular oxygen to 2 water molecules using 4 electrons from cytochrome c in the IMS and 4 protons from the mitochondrial matrix. The protein is Cytochrome c oxidase subunit 3 (MT-CO3) of Theileria annulata.